The sequence spans 807 residues: Leucine--tRNA ligase (807 aa).

The 'HIGH' region signature appears at P40–H51. A 'KMSKS' region motif is present at residues K576–S580. Residue K579 participates in ATP binding.

It belongs to the class-I aminoacyl-tRNA synthetase family.

The protein localises to the cytoplasm. The enzyme catalyses tRNA(Leu) + L-leucine + ATP = L-leucyl-tRNA(Leu) + AMP + diphosphate. The protein is Leucine--tRNA ligase of Pelodictyon phaeoclathratiforme (strain DSM 5477 / BU-1).